Here is a 123-residue protein sequence, read N- to C-terminus: Protein Wnt-7a (123 aa).

The O-palmitoleoyl serine; by PORCN moiety is linked to residue serine 1. The interval 33–61 is disordered linker; sequence VEPVRASRNKRPTFLKIKKPLSYLKPMDT. Cysteine 89 and cysteine 104 are disulfide-bonded. Asparagine 90 carries N-linked (GlcNAc...) asparagine glycosylation.

Belongs to the Wnt family. In terms of processing, palmitoleoylation is required for efficient binding to frizzled receptors. Depalmitoleoylation leads to Wnt signaling pathway inhibition.

It localises to the secreted. Its subcellular location is the extracellular space. The protein resides in the extracellular matrix. In terms of biological role, ligand for members of the frizzled family of seven transmembrane receptors that functions in the canonical Wnt/beta-catenin signaling pathway. Plays an important role in embryonic development, including dorsal versus ventral patterning during limb development, skeleton development and urogenital tract development. Required for central nervous system (CNS) angiogenesis and blood-brain barrier regulation. This Plethodon jordani (Red-cheeked salamander) protein is Protein Wnt-7a (WNT-7A).